A 171-amino-acid polypeptide reads, in one-letter code: 2-C-methyl-D-erythritol 2,4-cyclodiphosphate synthase (171 aa).

A divalent metal cation-binding residues include Asp-8 and His-10. 4-CDP-2-C-methyl-D-erythritol 2-phosphate-binding positions include 8-10 and 34-35; these read DVH and HS. Residue His-42 coordinates a divalent metal cation. 4-CDP-2-C-methyl-D-erythritol 2-phosphate contacts are provided by residues 56–58, 61–65, 132–135, Phe-139, and Arg-142; these read DIG, FPDTD, and TTTE.

This sequence belongs to the IspF family. In terms of assembly, homotrimer. Requires a divalent metal cation as cofactor.

The catalysed reaction is 4-CDP-2-C-methyl-D-erythritol 2-phosphate = 2-C-methyl-D-erythritol 2,4-cyclic diphosphate + CMP. It functions in the pathway isoprenoid biosynthesis; isopentenyl diphosphate biosynthesis via DXP pathway; isopentenyl diphosphate from 1-deoxy-D-xylulose 5-phosphate: step 4/6. Its function is as follows. Involved in the biosynthesis of isopentenyl diphosphate (IPP) and dimethylallyl diphosphate (DMAPP), two major building blocks of isoprenoid compounds. Catalyzes the conversion of 4-diphosphocytidyl-2-C-methyl-D-erythritol 2-phosphate (CDP-ME2P) to 2-C-methyl-D-erythritol 2,4-cyclodiphosphate (ME-CPP) with a corresponding release of cytidine 5-monophosphate (CMP). The chain is 2-C-methyl-D-erythritol 2,4-cyclodiphosphate synthase from Geotalea daltonii (strain DSM 22248 / JCM 15807 / FRC-32) (Geobacter daltonii).